The following is a 657-amino-acid chain: Filensin (657 aa).

Residues 1–38 are head; sequence MYRSSFLREVRKEKYERSDAYDELRGSPEFDSLAQAQG. One can recognise an IF rod domain in the interval 38–318; sequence GLENLQELNE…RIIENEDSRL (281 aa). Residues 39 to 73 form a coil 1A region; it reads LENLQELNERFASYINRARVLEQRNTILRKQLETF. The tract at residues 74–82 is linker 1; the sequence is QRMDELVGL. The segment at 83-182 is coil 1B; that stretch reads DEAFAGQIEF…RYKKNLMEIQ (100 aa). The tract at residues 183-199 is linker 12; it reads TYVNILQQIIQTTPRVS. A coil 2 region spans residues 200–318; that stretch reads PITTGISEEK…RIIENEDSRL (119 aa). The interval 319 to 657 is tail; the sequence is NSAIAGTPVT…SKKKPGDKGS (339 aa). 2 disordered regions span residues 503–530 and 565–593; these read IGGDVEPIPELPEPSEPSEKEKRDICER and PDVSEPEAVPSPGLISPAEPGVLQETDHD. A compositionally biased stretch (basic and acidic residues) spans 519–530; the sequence is PSEKEKRDICER.

This sequence belongs to the intermediate filament family. Detected in eye lens fiber cells (at protein level). Detected in embryonic eye lens.

The protein localises to the cell membrane. The protein resides in the cytoplasm. It is found in the cytoskeleton. Its subcellular location is the cell cortex. Functionally, required for the correct formation of lens intermediate filaments. The protein is Filensin (BFSP1) of Gallus gallus (Chicken).